The chain runs to 339 residues: tRNA N6-adenosine threonylcarbamoyltransferase (339 aa).

Fe cation-binding residues include histidine 114 and histidine 118. Residues 137 to 141 (VVSGG), aspartate 170, glycine 183, aspartate 187, and asparagine 277 each bind substrate. Aspartate 305 contacts Fe cation.

It belongs to the KAE1 / TsaD family. The cofactor is Fe(2+).

The protein resides in the cytoplasm. The catalysed reaction is L-threonylcarbamoyladenylate + adenosine(37) in tRNA = N(6)-L-threonylcarbamoyladenosine(37) in tRNA + AMP + H(+). Its function is as follows. Required for the formation of a threonylcarbamoyl group on adenosine at position 37 (t(6)A37) in tRNAs that read codons beginning with adenine. Is involved in the transfer of the threonylcarbamoyl moiety of threonylcarbamoyl-AMP (TC-AMP) to the N6 group of A37, together with TsaE and TsaB. TsaD likely plays a direct catalytic role in this reaction. The chain is tRNA N6-adenosine threonylcarbamoyltransferase from Clostridium perfringens (strain SM101 / Type A).